Reading from the N-terminus, the 161-residue chain is Photosystem I reaction center subunit XI (161 aa).

2 helical membrane passes run Leu84–Val104 and Phe126–Glu146.

This sequence belongs to the PsaL family.

It localises to the cellular thylakoid membrane. In Trichodesmium erythraeum (strain IMS101), this protein is Photosystem I reaction center subunit XI.